The chain runs to 273 residues: 4-hydroxy-tetrahydrodipicolinate reductase (273 aa).

Residue 12–17 (GANGRM) participates in NAD(+) binding. Arginine 39 provides a ligand contact to NADP(+). Residues 102-104 (GTT) and 126-129 (AANF) contribute to the NAD(+) site. Catalysis depends on histidine 159, which acts as the Proton donor/acceptor. A (S)-2,3,4,5-tetrahydrodipicolinate-binding site is contributed by histidine 160. Catalysis depends on lysine 163, which acts as the Proton donor. Residue 169 to 170 (GT) coordinates (S)-2,3,4,5-tetrahydrodipicolinate.

Belongs to the DapB family. In terms of assembly, homotetramer.

It localises to the cytoplasm. It carries out the reaction (S)-2,3,4,5-tetrahydrodipicolinate + NAD(+) + H2O = (2S,4S)-4-hydroxy-2,3,4,5-tetrahydrodipicolinate + NADH + H(+). The catalysed reaction is (S)-2,3,4,5-tetrahydrodipicolinate + NADP(+) + H2O = (2S,4S)-4-hydroxy-2,3,4,5-tetrahydrodipicolinate + NADPH + H(+). It participates in amino-acid biosynthesis; L-lysine biosynthesis via DAP pathway; (S)-tetrahydrodipicolinate from L-aspartate: step 4/4. Catalyzes the conversion of 4-hydroxy-tetrahydrodipicolinate (HTPA) to tetrahydrodipicolinate. The protein is 4-hydroxy-tetrahydrodipicolinate reductase of Cronobacter sakazakii (strain ATCC BAA-894) (Enterobacter sakazakii).